Consider the following 72-residue polypeptide: UPF0154 protein LBA1278 (72 aa).

A helical transmembrane segment spans residues 3-23 (LGLAIFLIIIALLVGATAGFY).

The protein belongs to the UPF0154 family.

It localises to the cell membrane. This chain is UPF0154 protein LBA1278, found in Lactobacillus acidophilus (strain ATCC 700396 / NCK56 / N2 / NCFM).